Consider the following 600-residue polypeptide: Cytidine monophosphate-N-acetylneuraminic acid hydroxylase (600 aa).

A Rieske domain is found at 9-107; that stretch reads LSPVEVASLK…VEMDENNRLL (99 aa). Residues cysteine 49, histidine 51, cysteine 70, and histidine 73 each coordinate [2Fe-2S] cluster.

This sequence belongs to the CMP-Neu5Ac hydroxylase family. It depends on [2Fe-2S] cluster as a cofactor.

It is found in the cytoplasm. It catalyses the reaction CMP-N-acetyl-beta-neuraminate + 2 Fe(II)-[cytochrome b5] + O2 + 2 H(+) = CMP-N-glycoloyl-beta-neuraminate + 2 Fe(III)-[cytochrome b5] + H2O. It participates in amino-sugar metabolism; N-acetylneuraminate metabolism. In terms of biological role, sialic acids are components of carbohydrate chains of glycoconjugates and are involved in cell-cell recognition and cell-pathogen interactions. Catalyzes the conversion of CMP-N-acetylneuraminic acid (CMP-Neu5Ac) into its hydroxylated derivative CMP-N-glycolylneuraminic acid (CMP-Neu5Gc), a sialic acid abundantly expressed at the surface of many cells. The chain is Cytidine monophosphate-N-acetylneuraminic acid hydroxylase (CMAH) from Pan paniscus (Pygmy chimpanzee).